A 1169-amino-acid chain; its full sequence is ATP-dependent helicase/deoxyribonuclease subunit B (1169 aa).

The UvrD-like helicase ATP-binding domain occupies 1–285; that stretch reads MEIQFLAGRS…TIFERNHRHL (285 aa). Residue 8 to 15 participates in ATP binding; sequence GRSGSGKT. The 307-residue stretch at 280-586 folds into the UvrD-like helicase C-terminal domain; sequence RNHRHLYTPD…KFALIPPSLD (307 aa). C801, C1121, C1124, and C1130 together coordinate [4Fe-4S] cluster.

It belongs to the helicase family. AddB/RexB type 1 subfamily. Heterodimer of AddA and AddB. Requires Mg(2+) as cofactor. The cofactor is [4Fe-4S] cluster.

Its function is as follows. The heterodimer acts as both an ATP-dependent DNA helicase and an ATP-dependent, dual-direction single-stranded exonuclease. Recognizes the chi site generating a DNA molecule suitable for the initiation of homologous recombination. The AddB subunit has 5' -&gt; 3' nuclease activity but not helicase activity. The protein is ATP-dependent helicase/deoxyribonuclease subunit B of Bacillus pumilus (strain SAFR-032).